We begin with the raw amino-acid sequence, 726 residues long: L-lysine 6-oxidase (726 aa).

The 4'-cysteinyl-tryptophylquinone (Cys-Trp) cross-link spans Cys-516–Trp-581. Trp-581 bears the Tryptophylquinone mark.

As to quaternary structure, homotetramer. Cysteine tryptophylquinone residue serves as cofactor. Post-translationally, the cysteine tryptophylquinone (CTQ) is generated by oxidation of the indole ring of a tryptophan residue to form tryptophylquinone, followed by covalent cross-linking with a cysteine residue.

The protein localises to the secreted. It catalyses the reaction L-lysine + O2 + H2O = (S)-2-amino-6-oxohexanoate + H2O2 + NH4(+). Inhibited by aminoguanidine, amiloride and beta-aminopropionitrile. Functionally, has antibacterial activity against a wide spectrum of Gram-positive and Gram-negative bacteria including nosocomial isolates of S.aureus and Pseudomonas sp. The antimicrobial activity is due to hydrogen peroxide generated by its lysine oxidase activity. Also has autotoxic activity. Involved in biofilm differentiation; responsible for cell death within microcolonies during biofilm development which is linked to the generation of a phenotypically diverse dispersal population and thus may play a role in colonization. This Marinomonas mediterranea (strain ATCC 700492 / JCM 21426 / NBRC 103028 / MMB-1) protein is L-lysine 6-oxidase (lodA).